The primary structure comprises 418 residues: Tryptophan synthase beta chain (418 aa).

A compositionally biased stretch (polar residues) spans Met1–Pro18. Residues Met1–Gly23 form a disordered region. N6-(pyridoxal phosphate)lysine is present on Lys111.

It belongs to the TrpB family. In terms of assembly, tetramer of two alpha and two beta chains. Pyridoxal 5'-phosphate is required as a cofactor.

It catalyses the reaction (1S,2R)-1-C-(indol-3-yl)glycerol 3-phosphate + L-serine = D-glyceraldehyde 3-phosphate + L-tryptophan + H2O. It participates in amino-acid biosynthesis; L-tryptophan biosynthesis; L-tryptophan from chorismate: step 5/5. Functionally, the beta subunit is responsible for the synthesis of L-tryptophan from indole and L-serine. The sequence is that of Tryptophan synthase beta chain from Parasynechococcus marenigrum (strain WH8102).